Consider the following 316-residue polypeptide: Daunorubicin resistance ATP-binding protein DrrA3 (316 aa).

Residues 6 to 236 form the ABC transporter domain; it reads ITVDGAEKRY…TGGDRIDVVL (231 aa). 38–45 is an ATP binding site; that stretch reads GPNGAGKT.

This sequence belongs to the ABC transporter superfamily. Drug exporter-1 (DrugE1) (TC 3.A.1.105) family. As to quaternary structure, the complex is probably composed of two ATP-binding proteins (DrrA3) and two transmembrane proteins (DrrB3).

The protein localises to the cell membrane. The enzyme catalyses daunorubicin(in) + ATP + H2O = daunorubicin(out) + ADP + phosphate + H(+). Part of the ABC transporter complex DrrA3B3 involved in daunorubicin efflux. Responsible for energy coupling to the transport system. Confers self-resistance to daunorubicin, an antibiotic produced by S.coeruleorubidus. The efficiency of DrrA3B3 to export daunorubicin is probably lower than that of DrrA1B1 or DrrA2B2. This Streptomyces coeruleorubidus protein is Daunorubicin resistance ATP-binding protein DrrA3.